Consider the following 244-residue polypeptide: Small ribosomal subunit protein uS2 (244 aa).

It belongs to the universal ribosomal protein uS2 family.

This chain is Small ribosomal subunit protein uS2, found in Endomicrobium trichonymphae.